The chain runs to 289 residues: BTB/POZ domain-containing protein KCTD7 (289 aa).

Positions 1-35 are disordered; that stretch reads MVVVTGREPDSRRQDGAMSSSDAEDDFLEPATPTA. Residues 51 to 149 form the BTB domain; the sequence is EVVPLNIGGA…QLENMQPLKG (99 aa).

Interacts with CUL3.

Its subcellular location is the cell membrane. It localises to the cytoplasm. The protein localises to the cytosol. Its function is as follows. May be involved in the control of excitability of cortical neurons. This is BTB/POZ domain-containing protein KCTD7 (KCTD7) from Homo sapiens (Human).